Consider the following 297-residue polypeptide: Protoheme IX farnesyltransferase (297 aa).

The next 9 helical transmembrane spans lie at 26 to 46 (VTQL…PGMV), 48 to 68 (YPVL…AFAV), 96 to 116 (FHII…LWNF), 120 to 140 (LTMW…TWLL), 147 to 167 (NIVI…AAVT), 174 to 194 (AWLL…ALAL), 218 to 238 (LLNI…PYIY), 243 to 263 (IIYL…VIAL), and 276 to 296 (FRFS…DHYF).

It belongs to the UbiA prenyltransferase family. Protoheme IX farnesyltransferase subfamily.

The protein resides in the cell membrane. The catalysed reaction is heme b + (2E,6E)-farnesyl diphosphate + H2O = Fe(II)-heme o + diphosphate. Its pathway is porphyrin-containing compound metabolism; heme O biosynthesis; heme O from protoheme: step 1/1. Converts heme B (protoheme IX) to heme O by substitution of the vinyl group on carbon 2 of heme B porphyrin ring with a hydroxyethyl farnesyl side group. This Polynucleobacter asymbioticus (strain DSM 18221 / CIP 109841 / QLW-P1DMWA-1) (Polynucleobacter necessarius subsp. asymbioticus) protein is Protoheme IX farnesyltransferase.